The sequence spans 244 residues: Glucosamine-6-phosphate deaminase (244 aa).

Aspartate 67 acts as the Proton acceptor; for enolization step in catalysis. Asparagine 133 functions as the For ring-opening step in the catalytic mechanism. The active-site Proton acceptor; for ring-opening step is histidine 135. The active-site For ring-opening step is glutamate 140.

Belongs to the glucosamine/galactosamine-6-phosphate isomerase family. NagB subfamily.

It carries out the reaction alpha-D-glucosamine 6-phosphate + H2O = beta-D-fructose 6-phosphate + NH4(+). The protein operates within amino-sugar metabolism; N-acetylneuraminate degradation; D-fructose 6-phosphate from N-acetylneuraminate: step 5/5. Catalyzes the reversible isomerization-deamination of glucosamine 6-phosphate (GlcN6P) to form fructose 6-phosphate (Fru6P) and ammonium ion. In Mycoplasma mycoides subsp. mycoides SC (strain CCUG 32753 / NCTC 10114 / PG1), this protein is Glucosamine-6-phosphate deaminase.